A 417-amino-acid chain; its full sequence is MAEIKNYTLNFGPQHPAAHGVLRLVLELDGEVIQRADPHIGLLHRGTEKLAESKTFIQSLPYMDRLDYVSMMCNEHAYCLAIEKLMGIQVPERAQYIRVMFSEITRLLNHLLWLGCHGMDCGAMNMLIYCFREREDLFDMYEAVSGARMHAAYFRPGGVYRDLPDVMPQYKVSKIRNAKAMARLNENRQGSLLDFIDDFTKRFPTLVDEYETLLTDNRIWKQRTVGIGVLTPERALNLGLTGAMIRGSGIAWDLRKTQPYDVYDRMDFDIPVGVNGDTYDRYLVRVEEMRQSNRIIEQCSAWLRANPGPVITDNHKVAPPSRVEMKTSMEELIHHFKLFTEGFHVPEGEAYAAVEHPKGEFGIYAISDGANKPYRLKIRAPGFAHLAALDEMSRGHMIADAVAIIGTMDIVFGEIDR.

The protein belongs to the complex I 49 kDa subunit family. NDH-1 is composed of 14 different subunits. Subunits NuoB, C, D, E, F, and G constitute the peripheral sector of the complex.

Its subcellular location is the cell inner membrane. The catalysed reaction is a quinone + NADH + 5 H(+)(in) = a quinol + NAD(+) + 4 H(+)(out). In terms of biological role, NDH-1 shuttles electrons from NADH, via FMN and iron-sulfur (Fe-S) centers, to quinones in the respiratory chain. The immediate electron acceptor for the enzyme in this species is believed to be ubiquinone. Couples the redox reaction to proton translocation (for every two electrons transferred, four hydrogen ions are translocated across the cytoplasmic membrane), and thus conserves the redox energy in a proton gradient. The polypeptide is NADH-quinone oxidoreductase subunit D (Leptothrix cholodnii (strain ATCC 51168 / LMG 8142 / SP-6) (Leptothrix discophora (strain SP-6))).